A 108-amino-acid polypeptide reads, in one-letter code: Gibberellin-regulated protein 7 (108 aa).

Positions 1 to 23 (MKIIVSILVLASLLLISSSLASA) are cleaved as a signal peptide.

It belongs to the GASA family. Six disulfide bonds may be present.

The protein localises to the secreted. Gibberellin-regulated protein that may function in hormonal controlled steps of development such as seed germination, flowering and seed maturation. This Arabidopsis thaliana (Mouse-ear cress) protein is Gibberellin-regulated protein 7 (GASA7).